A 203-amino-acid polypeptide reads, in one-letter code: Xrcc4-like factor 1 (203 aa).

It belongs to the XRCC4-XLF family. XLF subfamily.

It is found in the nucleus. Its function is as follows. Involved in double-strand break repair via non-homologous end joining (NHEJ); the repair of a double-strand break in DNA in which the two broken ends are rejoined with little or no sequence complementarity. Has a role in meiosis. In Schizosaccharomyces pombe (strain 972 / ATCC 24843) (Fission yeast), this protein is Xrcc4-like factor 1 (xlf1).